Here is a 277-residue protein sequence, read N- to C-terminus: Radial spoke head protein 9 homolog (277 aa).

It belongs to the flagellar radial spoke RSP9 family. In terms of assembly, component of axonemal radial spoke complexes.

It is found in the cytoplasm. The protein resides in the cytoskeleton. It localises to the cilium axoneme. Its subcellular location is the flagellum axoneme. The protein localises to the cell projection. It is found in the kinocilium. Functionally, functions as part of axonemal radial spoke complexes that play an important part in the motility of sperm and cilia. Essential for both the radial spoke head assembly and the central pair microtubule stability in ependymal motile cilia. Required for motility of olfactory and neural cilia and for the structural integrity of ciliary axonemes in both 9+0 and 9+2 motile cilia. The protein is Radial spoke head protein 9 homolog (rsph9) of Xenopus tropicalis (Western clawed frog).